The primary structure comprises 306 residues: Type 2A encapsulin shell protein SrpI (306 aa).

It belongs to the encapsulin family. Family 2A subfamily. The 24.5 nm encapsulin nanocompartment is formed by 60 subunits; monomers form pentamers which assemble to form shells. There are 12 positively charged pores where the pentamers meet with a minimal pore diameter of 3.7 Angstroms as well 3-fold axis channels and dimer channels.

The protein localises to the encapsulin nanocompartment. Functionally, shell component of a type 2A encapsulin nanocompartment. Expression in E.coli generates nanocompartments with an average diameter of 25 nm. They can be disassembled by treatment with 6M guanidine hydrochloride and reassembled with cargo. The nanocompartment is probably involved in sulfur metabolism. Probably allows passage of cysteine into its interior; during growth in light the physiological pH is 8-8.4, about 30-54% of free cysteine (charge -1) would be able to pass through the shell. The polypeptide is Type 2A encapsulin shell protein SrpI (Synechococcus elongatus (strain ATCC 33912 / PCC 7942 / FACHB-805) (Anacystis nidulans R2)).